Reading from the N-terminus, the 519-residue chain is Bifunctional pantoate ligase/cytidylate kinase (519 aa).

Residues 1-282 (MNLTILRTKT…CGNTRLIDHG (282 aa)) are pantoate--beta-alanine ligase. Residue 30–37 (MGGLHQGH) coordinates ATP. Residue His-37 is the Proton donor of the active site. Gln-66 serves as a coordination point for (R)-pantoate. Position 66 (Gln-66) interacts with beta-alanine. 155–158 (GEKD) is a binding site for ATP. Gln-161 lines the (R)-pantoate pocket. 192-195 (CSSR) lines the ATP pocket. A cytidylate kinase region spans residues 283 to 519 (FLMKRNPIVA…PQEVWPTNAT (237 aa)).

In the N-terminal section; belongs to the pantothenate synthetase family. This sequence in the C-terminal section; belongs to the cytidylate kinase family. Type 1 subfamily.

Its subcellular location is the cytoplasm. The enzyme catalyses (R)-pantoate + beta-alanine + ATP = (R)-pantothenate + AMP + diphosphate + H(+). It carries out the reaction CMP + ATP = CDP + ADP. The catalysed reaction is dCMP + ATP = dCDP + ADP. It participates in cofactor biosynthesis; (R)-pantothenate biosynthesis; (R)-pantothenate from (R)-pantoate and beta-alanine: step 1/1. Catalyzes the condensation of pantoate with beta-alanine in an ATP-dependent reaction via a pantoyl-adenylate intermediate. In terms of biological role, catalyzes the transfer of a phosphate group from ATP to either CMP or dCMP to form CDP or dCDP and ADP, respectively. This Prochlorococcus marinus (strain SARG / CCMP1375 / SS120) protein is Bifunctional pantoate ligase/cytidylate kinase.